Consider the following 203-residue polypeptide: Putative 3-methyladenine DNA glycosylase (203 aa).

It belongs to the DNA glycosylase MPG family.

The sequence is that of Putative 3-methyladenine DNA glycosylase from Desulfitobacterium hafniense (strain Y51).